The sequence spans 449 residues: Glucose-6-phosphate isomerase (449 aa).

E291 functions as the Proton donor in the catalytic mechanism. Residues H312 and K426 contribute to the active site.

This sequence belongs to the GPI family.

The protein resides in the cytoplasm. It carries out the reaction alpha-D-glucose 6-phosphate = beta-D-fructose 6-phosphate. Its pathway is carbohydrate biosynthesis; gluconeogenesis. The protein operates within carbohydrate degradation; glycolysis; D-glyceraldehyde 3-phosphate and glycerone phosphate from D-glucose: step 2/4. Functionally, catalyzes the reversible isomerization of glucose-6-phosphate to fructose-6-phosphate. In Streptococcus pyogenes serotype M18 (strain MGAS8232), this protein is Glucose-6-phosphate isomerase.